A 103-amino-acid chain; its full sequence is UPF0102 protein aq_041 (103 aa).

It belongs to the UPF0102 family.

The chain is UPF0102 protein aq_041 from Aquifex aeolicus (strain VF5).